A 158-amino-acid polypeptide reads, in one-letter code: MPLLLSGKKFHNDLKTNKCLAIFAPLEGGYETRLLRRMRAKGFKTFITSARGLGDPEVFLLKLHGVRPPHLGHQSVGRNGALGEVQQVIPQASELFNENDKNKLLWLLEGQVLSQSELESLIEICTNDNKLTIVVEMGGSRKLEWKPLSNYILDEFES.

The protein belongs to the complex I NdhN subunit family. NDH-1 can be composed of about 15 different subunits; different subcomplexes with different compositions have been identified which probably have different functions.

It localises to the cellular thylakoid membrane. The enzyme catalyses a plastoquinone + NADH + (n+1) H(+)(in) = a plastoquinol + NAD(+) + n H(+)(out). The catalysed reaction is a plastoquinone + NADPH + (n+1) H(+)(in) = a plastoquinol + NADP(+) + n H(+)(out). NDH-1 shuttles electrons from an unknown electron donor, via FMN and iron-sulfur (Fe-S) centers, to quinones in the respiratory and/or the photosynthetic chain. The immediate electron acceptor for the enzyme in this species is believed to be plastoquinone. Couples the redox reaction to proton translocation, and thus conserves the redox energy in a proton gradient. Cyanobacterial NDH-1 also plays a role in inorganic carbon-concentration. This chain is NAD(P)H-quinone oxidoreductase subunit N, found in Prochlorococcus marinus (strain AS9601).